Reading from the N-terminus, the 221-residue chain is tRNA (guanine-N(7)-)-methyltransferase (221 aa).

S-adenosyl-L-methionine contacts are provided by Glu46, Asp71, and Asp120. Asp120 is a catalytic residue. Residue Asp156 participates in substrate binding.

Belongs to the class I-like SAM-binding methyltransferase superfamily. TrmB family.

The catalysed reaction is guanosine(46) in tRNA + S-adenosyl-L-methionine = N(7)-methylguanosine(46) in tRNA + S-adenosyl-L-homocysteine. It functions in the pathway tRNA modification; N(7)-methylguanine-tRNA biosynthesis. Its function is as follows. Catalyzes the formation of N(7)-methylguanine at position 46 (m7G46) in tRNA. This is tRNA (guanine-N(7)-)-methyltransferase from Cytophaga hutchinsonii (strain ATCC 33406 / DSM 1761 / CIP 103989 / NBRC 15051 / NCIMB 9469 / D465).